The primary structure comprises 449 residues: HSPB1-associated protein 1 homolog (449 aa).

The JmjC domain maps to 102–266 (WAYADYKYIA…DEARVAEALT (165 aa)). The segment covering 385–395 (DQDKLRSDNKL) has biased composition (basic and acidic residues). The interval 385-416 (DQDKLRSDNKLGQRSGQSVLQDTENPGGSGEM) is disordered. A compositionally biased stretch (polar residues) spans 396–410 (GQRSGQSVLQDTENP).

Its subcellular location is the cytoplasm. In terms of biological role, may play a role in cellular stress response. The polypeptide is HSPB1-associated protein 1 homolog (hspbap1) (Danio rerio (Zebrafish)).